A 316-amino-acid polypeptide reads, in one-letter code: Protease HtpX homolog (316 aa).

Residues leucine 16 to valine 36 traverse the membrane as a helical segment. Histidine 130 is a Zn(2+) binding site. Glutamate 131 is a catalytic residue. Residue histidine 134 coordinates Zn(2+). 2 helical membrane passes run methionine 145 to alanine 165 and leucine 174 to isoleucine 194. Residue glutamate 199 coordinates Zn(2+). The interval proline 285–glycine 316 is disordered.

Belongs to the peptidase M48B family. Zn(2+) serves as cofactor.

The protein localises to the cell inner membrane. The polypeptide is Protease HtpX homolog (Rhizorhabdus wittichii (strain DSM 6014 / CCUG 31198 / JCM 15750 / NBRC 105917 / EY 4224 / RW1) (Sphingomonas wittichii)).